The sequence spans 78 residues: uncharacterized protein (78 aa).

The tract at residues 1–28 is disordered; the sequence is MQANHSVSYLYESSTSKRSNGLFSQTQK.

This is an uncharacterized protein from Saccharomyces cerevisiae (strain ATCC 204508 / S288c) (Baker's yeast).